Here is a 371-residue protein sequence, read N- to C-terminus: Glutamate 5-kinase 2 (371 aa).

Lys13 lines the ATP pocket. Residues Ser53, Asp140, and Asn152 each coordinate substrate. ATP is bound by residues 172 to 173 (SD) and 214 to 220 (TGGMRSK). In terms of domain architecture, PUA spans 280 to 356 (EGEMILSDDC…KELTNRALID (77 aa)).

It belongs to the glutamate 5-kinase family.

The protein resides in the cytoplasm. The catalysed reaction is L-glutamate + ATP = L-glutamyl 5-phosphate + ADP. The protein operates within amino-acid biosynthesis; L-proline biosynthesis; L-glutamate 5-semialdehyde from L-glutamate: step 1/2. Functionally, catalyzes the transfer of a phosphate group to glutamate to form L-glutamate 5-phosphate. The chain is Glutamate 5-kinase 2 (proJ) from Bacillus subtilis (strain 168).